Here is a 319-residue protein sequence, read N- to C-terminus: Probable ABC transporter permease protein MG189 homolog (319 aa).

6 consecutive transmembrane segments (helical) span residues 41–61 (VVLC…LVVA), 98–118 (AIWI…FFTV), 134–154 (LFWF…LIGQ), 169–189 (PAII…GFMF), 229–249 (TVSI…LLLL), and 282–302 (NLKM…YFLF). Residues 99–302 (IWINSLVTIL…LPMFIVYFLF (204 aa)) enclose the ABC transmembrane type-1 domain.

This sequence belongs to the binding-protein-dependent transport system permease family. MalFG subfamily.

The protein resides in the cell membrane. Its function is as follows. Probably part of a binding-protein-dependent transport system. Probably responsible for the translocation of the substrate across the membrane. This is Probable ABC transporter permease protein MG189 homolog from Mycoplasma pneumoniae (strain ATCC 29342 / M129 / Subtype 1) (Mycoplasmoides pneumoniae).